We begin with the raw amino-acid sequence, 462 residues long: Retinoic acid receptor alpha (462 aa).

The segment at 1–87 (MASNSSSCPT…PPPLPRIYKP (87 aa)) is modulating. The span at 52–64 (GYSTPSPATIETQ) shows a compositional bias: polar residues. The segment at 52–77 (GYSTPSPATIETQSSSSEEIVPSPPS) is disordered. The residue at position 77 (S77) is a Phosphoserine; by CDK7. 2 NR C4-type zinc fingers span residues 88 to 108 (CFVCQDKSSGYHYGVSACEGC) and 124 to 148 (CHRDKNCIINKVTRNRCQYCRLQKC). The segment at residues 88–153 (CFVCQDKSSG…RLQKCFDVGM (66 aa)) is a DNA-binding region (nuclear receptor). A Phosphoserine; by PKB/AKT1 modification is found at S96. The hinge stretch occupies residues 154–182 (SKESVRNDRNKKKKEAPKPECSESYTLTP). Glycyl lysine isopeptide (Lys-Gly) (interchain with G-Cter in SUMO) cross-links involve residues K166 and K171. An NR LBD domain is found at 183–417 (EVGELIEKVR…PLIQEMLENS (235 aa)). The residue at position 219 (S219) is a Phosphoserine; by PKA. C235 serves as a coordination point for all-trans-retinoate. The short motif at 254–258 (IADQI) is the UBR5-degron element. All-trans-retinoate is bound at residue S287. K347 carries the N6,N6,N6-trimethyllysine modification. Phosphoserine; by PKA and RPS6KA5 is present on S369. Residue K399 forms a Glycyl lysine isopeptide (Lys-Gly) (interchain with G-Cter in SUMO) linkage. The required for binding corepressor NCOR1 stretch occupies residues 404 to 419 (GSMPPLIQEMLENSEG). The 9aaTAD motif lies at 408–416 (PLIQEMLEN). Positions 420–462 (LDTLSGQSGGGTRDGGGLAPPPGSCSPSLSPSSHRSSPATQSP) are disordered. Positions 426-437 (QSGGGTRDGGGL) are enriched in gly residues. Positions 444–462 (CSPSLSPSSHRSSPATQSP) are enriched in low complexity.

It belongs to the nuclear hormone receptor family. NR1 subfamily. As to quaternary structure, heterodimer; with RXRA. Binds DNA preferentially as a heterodimer. RXRA serves as enhancer to induce RARA binding to RARE. Interacts with RXRG. Interacts with NCOA3 and NCOA6 coactivators, leading to a strong increase of transcription of target genes. Interacts with NCOA7; the interaction requires ligand-binding. Interacts (via the ligand-binding domain) with PRAME; interaction is direct and ligand (retinoic acid)-dependent. Interacts with PRKAR1A; the interaction negatively regulates RARA transcriptional activity. Interacts with NCOR1; the interaction occurs in the absence of ligand and represses transcriptional activity. Interacts with NCOR2. Interacts with PRMT2. Interacts with LRIF1. Interacts with ASXL1 and NCOA1. Interacts with ACTN4. Interacts with CDK7; the interaction is enhanced by interaction with GTF2H3. Interacts with GTF2H3; the interaction requires prior phosphorylation on Ser-369 which then enhances interaction with CDK7. In a complex with HDAC3, HDAC5 and HDAC7; the HDACs serve as corepressors of RARA, causing its deacetylation and inhibition of RARE DNA element binding; association with HDAC3, HDAC5 and HDAC7 is increased upon oscillatory shear stress. In the absence of hormonal ligand, interacts with TACC1. In terms of processing, phosphorylated on serine and threonine residues. Phosphorylation does not change during cell cycle. Phosphorylation on Ser-77 is crucial for the N-terminal AF1 transcriptional activity. Under stress conditions, MAPK8 enhances phosphorylation on Thr-181, Ser-445 and Ser-461 leading to RARA ubiquitination and degradation. Phosphorylation by AKT1 inhibits the transactivation activity. On retinoic acid stimulation, phosphorylation on Ser-369 by RPS6KA5 promotes interaction with GTF2H3 and the CDK7-mediated phosphorylation of Ser-77. Ubiquitinated by UBR5, leading to its degradation: UBR5 specifically recognizes and binds ligand-bound RARA when it is not associated with coactivators (NCOAs). In presence of NCOAs, the UBR5-degron is not accessible, preventing its ubiquitination and degradation. Post-translationally, sumoylated with SUMO2, mainly on Lys-399 which is also required for SENP6 binding. On all-trans retinoic acid (ATRA) binding, a conformational change may occur that allows sumoylation on two additional site, Lys-166 and Lys-171. Probably desumoylated by SENP6. Sumoylation levels determine nuclear localization and regulate ATRA-mediated transcriptional activity. In terms of processing, acetylated; acetylation is increased upon pulsatile shear stress and decreased upon oscillatory shear stress. As to expression, expressed in Sertoli cells and germ cells.

The protein resides in the nucleus. Its subcellular location is the cytoplasm. Its function is as follows. Receptor for retinoic acid. Retinoic acid receptors bind as heterodimers to their target response elements in response to their ligands, all-trans or 9-cis retinoic acid, and regulate gene expression in various biological processes. The RXR/RAR heterodimers bind to the retinoic acid response elements (RARE) composed of tandem 5'-AGGTCA-3' sites known as DR1-DR5. In the absence of ligand, the RXR-RAR heterodimers associate with a multiprotein complex containing transcription corepressors that induce histone deacetylation, chromatin condensation and transcriptional suppression. On ligand binding, the corepressors dissociate from the receptors and associate with the coactivators leading to transcriptional activation. Formation of heterocomplex with histone deacetylases might lead to inhibition of RARE DNA element binding and to transcriptional repression. Transcriptional activation and RARE DNA element binding might be supported by the transcription factor KLF2. RARA plays an essential role in the regulation of retinoic acid-induced germ cell development during spermatogenesis. Has a role in the survival of early spermatocytes at the beginning prophase of meiosis. In Sertoli cells, may promote the survival and development of early meiotic prophase spermatocytes. In concert with RARG, required for skeletal growth, matrix homeostasis and growth plate function. Together with RXRA, positively regulates microRNA-10a expression, thereby inhibiting the GATA6/VCAM1 signaling response to pulsatile shear stress in vascular endothelial cells. In association with HDAC3, HDAC5 and HDAC7 corepressors, plays a role in the repression of microRNA-10a and thereby promotes the inflammatory response. This Mus musculus (Mouse) protein is Retinoic acid receptor alpha (Rara).